A 465-amino-acid chain; its full sequence is 3-isopropylmalate dehydratase large subunit (465 aa).

Cysteine 347, cysteine 407, and cysteine 410 together coordinate [4Fe-4S] cluster.

The protein belongs to the aconitase/IPM isomerase family. LeuC type 1 subfamily. As to quaternary structure, heterodimer of LeuC and LeuD. Requires [4Fe-4S] cluster as cofactor.

The enzyme catalyses (2R,3S)-3-isopropylmalate = (2S)-2-isopropylmalate. Its pathway is amino-acid biosynthesis; L-leucine biosynthesis; L-leucine from 3-methyl-2-oxobutanoate: step 2/4. Its function is as follows. Catalyzes the isomerization between 2-isopropylmalate and 3-isopropylmalate, via the formation of 2-isopropylmaleate. The polypeptide is 3-isopropylmalate dehydratase large subunit (Aeromonas salmonicida (strain A449)).